Reading from the N-terminus, the 346-residue chain is Holliday junction branch migration complex subunit RuvB (346 aa).

The segment at 1–182 (MSEPARLISP…FGIPVRLSFY (182 aa)) is large ATPase domain (RuvB-L). Residues Leu21, Arg22, Gly63, Lys66, Thr67, Thr68, 129–131 (EDF), Arg172, Tyr182, and Arg219 each bind ATP. Thr67 lines the Mg(2+) pocket. A small ATPAse domain (RuvB-S) region spans residues 183 to 253 (TVEELELIVR…IADEALTRLL (71 aa)). The interval 256-346 (NVGFDQLDKR…AQFRLFQEDN (91 aa)) is head domain (RuvB-H). 3 residues coordinate DNA: Arg292, Arg311, and Arg316.

It belongs to the RuvB family. In terms of assembly, homohexamer. Forms an RuvA(8)-RuvB(12)-Holliday junction (HJ) complex. HJ DNA is sandwiched between 2 RuvA tetramers; dsDNA enters through RuvA and exits via RuvB. An RuvB hexamer assembles on each DNA strand where it exits the tetramer. Each RuvB hexamer is contacted by two RuvA subunits (via domain III) on 2 adjacent RuvB subunits; this complex drives branch migration. In the full resolvosome a probable DNA-RuvA(4)-RuvB(12)-RuvC(2) complex forms which resolves the HJ.

It localises to the cytoplasm. It carries out the reaction ATP + H2O = ADP + phosphate + H(+). The RuvA-RuvB-RuvC complex processes Holliday junction (HJ) DNA during genetic recombination and DNA repair, while the RuvA-RuvB complex plays an important role in the rescue of blocked DNA replication forks via replication fork reversal (RFR). RuvA specifically binds to HJ cruciform DNA, conferring on it an open structure. The RuvB hexamer acts as an ATP-dependent pump, pulling dsDNA into and through the RuvAB complex. RuvB forms 2 homohexamers on either side of HJ DNA bound by 1 or 2 RuvA tetramers; 4 subunits per hexamer contact DNA at a time. Coordinated motions by a converter formed by DNA-disengaged RuvB subunits stimulates ATP hydrolysis and nucleotide exchange. Immobilization of the converter enables RuvB to convert the ATP-contained energy into a lever motion, pulling 2 nucleotides of DNA out of the RuvA tetramer per ATP hydrolyzed, thus driving DNA branch migration. The RuvB motors rotate together with the DNA substrate, which together with the progressing nucleotide cycle form the mechanistic basis for DNA recombination by continuous HJ branch migration. Branch migration allows RuvC to scan DNA until it finds its consensus sequence, where it cleaves and resolves cruciform DNA. This Rhizobium johnstonii (strain DSM 114642 / LMG 32736 / 3841) (Rhizobium leguminosarum bv. viciae) protein is Holliday junction branch migration complex subunit RuvB.